A 496-amino-acid polypeptide reads, in one-letter code: MHNSPLYAAIDLGSNSFHMLVVREVAGALRTVTKVKRKVRLAAGLDPEFRLSRAAMERGWDCLRLFSEQLQDIPADNIRVVGTATLRLATNVDEFLSEAERVLNHSIEIISGEEEAKTIYEGVSWTSAGEGNRLVIDIGGASTELVIGEHSEAKLLNSLHMGCVTWLNNHFGDGELSEARFKQAIAAAKAVLEKVAEDYRALGWRTCVGASGTVQALQEIMLAQGKSERVTLPKLQELMGQAIACGKLDQLQLEGLAAERLTVFPSGLAILIAIFETLGIESMTLAGGALREGLIYGLLGNNHDCDARDRTADSLINRYQLDKEHAERVRDTAVEAFNQLQPAWRLSKRYGRPILRYAALLHEIGLCIEYKKAPQHAAYIIDNIDMPGFTPAQKKLLSALLFNQRDEFKLEPLEKQGAVTGRQAIRLARILRIALILCMRRTQGTVPRFTLEADEDALTLTLPSGWLDEHYLRASELRFEVERQQKMGWPTRLLEA.

Belongs to the GppA/Ppx family. GppA subfamily.

It carries out the reaction guanosine 3'-diphosphate 5'-triphosphate + H2O = guanosine 3',5'-bis(diphosphate) + phosphate + H(+). The protein operates within purine metabolism; ppGpp biosynthesis; ppGpp from GTP: step 2/2. Its function is as follows. Catalyzes the conversion of pppGpp to ppGpp. Guanosine pentaphosphate (pppGpp) is a cytoplasmic signaling molecule which together with ppGpp controls the 'stringent response', an adaptive process that allows bacteria to respond to amino acid starvation, resulting in the coordinated regulation of numerous cellular activities. The polypeptide is Guanosine-5'-triphosphate,3'-diphosphate pyrophosphatase (Aeromonas hydrophila subsp. hydrophila (strain ATCC 7966 / DSM 30187 / BCRC 13018 / CCUG 14551 / JCM 1027 / KCTC 2358 / NCIMB 9240 / NCTC 8049)).